The following is a 191-amino-acid chain: RNA polymerase sigma factor CnrH (191 aa).

A Polymerase core binding motif is present at residues 49-62 (DVVQDTFVAAWHAL). The segment at residues 156 to 175 (QPEAAAVLGLSVKAVEGRIG) is a DNA-binding region (H-T-H motif).

It belongs to the sigma-70 factor family. ECF subfamily.

Its function is as follows. Sigma factors are initiation factors that promote the attachment of RNA polymerase to specific initiation sites and are then released. This sigma factor regulates the genes for a membrane-located efflux system that confers resistance to nickel and cobalt. In terms of biological role, cnrH alone is able to activate CNR expression, while both CnrY and CrnX are needed for nickel induction of cnrH. Binds DNA in an RNA polymerase-dependent fashion. CnrH may be controlled by a CnrYX transmembrane anti-sigma factor complex which binds CnrH in the absence of Ni(2+). If Ni(2+) appears in the periplasm, it may be bound by CnrR (CnrX); the signal then would be transmitted by CnrY into the cytoplasm and CnrH would be released. This chain is RNA polymerase sigma factor CnrH (cnrH), found in Cupriavidus metallidurans (strain ATCC 43123 / DSM 2839 / NBRC 102507 / CH34) (Ralstonia metallidurans).